The following is a 520-amino-acid chain: Ribonuclease Y (520 aa).

The chain crosses the membrane as a helical span at residues 4–24 (VSGILLVLIGLLAGVGLGVLL). In terms of domain architecture, KH spans 210-270 (TVSVVNLPNE…VRREVARVSL (61 aa)). The 94-residue stretch at 336 to 429 (VLQHSREVAF…VQAADALSGA (94 aa)) folds into the HD domain.

This sequence belongs to the RNase Y family.

It localises to the cell membrane. Endoribonuclease that initiates mRNA decay. The sequence is that of Ribonuclease Y from Syntrophobacter fumaroxidans (strain DSM 10017 / MPOB).